A 232-amino-acid chain; its full sequence is MAKVSKRYKALAEKVEERKYSLAEACTTVRDLKSAKFDESVEIALNLNVDPRHADQMIRGAVVLPNGTGKTVRVAVFAKGVKLDEAKAAGADVVGNDDLAEAIQAGNINFDVLIATPDCMGIVGKVGRILGPKGLMPNPKTGTVTMDVTKAVNDAKGGQVTYRVDKKGNMQAAVGKVSFSAEAIKENVEAFVAAINKAKPSTAKGRYITNAAISLTMSPSIILDNMELMEIR.

Belongs to the universal ribosomal protein uL1 family. Part of the 50S ribosomal subunit.

In terms of biological role, binds directly to 23S rRNA. The L1 stalk is quite mobile in the ribosome, and is involved in E site tRNA release. Functionally, protein L1 is also a translational repressor protein, it controls the translation of the L11 operon by binding to its mRNA. In Aliarcobacter butzleri (strain RM4018) (Arcobacter butzleri), this protein is Large ribosomal subunit protein uL1.